A 72-amino-acid polypeptide reads, in one-letter code: Translation initiation factor IF-1 (72 aa).

The S1-like domain occupies 1-72; it reads MAKEDCIEME…TKGRIKFRSK (72 aa).

It belongs to the IF-1 family. As to quaternary structure, component of the 30S ribosomal translation pre-initiation complex which assembles on the 30S ribosome in the order IF-2 and IF-3, IF-1 and N-formylmethionyl-tRNA(fMet); mRNA recruitment can occur at any time during PIC assembly.

It localises to the cytoplasm. In terms of biological role, one of the essential components for the initiation of protein synthesis. Stabilizes the binding of IF-2 and IF-3 on the 30S subunit to which N-formylmethionyl-tRNA(fMet) subsequently binds. Helps modulate mRNA selection, yielding the 30S pre-initiation complex (PIC). Upon addition of the 50S ribosomal subunit IF-1, IF-2 and IF-3 are released leaving the mature 70S translation initiation complex. The chain is Translation initiation factor IF-1 from Francisella tularensis subsp. novicida (strain U112).